Here is a 29-residue protein sequence, read N- to C-terminus: Galanin (29 aa).

Thr-29 bears the Threonine amide mark.

This sequence belongs to the galanin family.

It localises to the secreted. Functionally, contracts smooth muscle of the gastrointestinal and genitourinary tract, regulates growth hormone release, modulates insulin release, and may be involved in the control of adrenal secretion. The chain is Galanin (GAL) from Gallus gallus (Chicken).